The following is an 804-amino-acid chain: Leucine--tRNA ligase (804 aa).

Residues 40–51 carry the 'HIGH' region motif; sequence PYPSGAGLHVGH. Positions 576 to 580 match the 'KMSKS' region motif; the sequence is KMSKS. ATP is bound at residue K579.

The protein belongs to the class-I aminoacyl-tRNA synthetase family.

Its subcellular location is the cytoplasm. The catalysed reaction is tRNA(Leu) + L-leucine + ATP = L-leucyl-tRNA(Leu) + AMP + diphosphate. The chain is Leucine--tRNA ligase from Staphylococcus aureus (strain Mu3 / ATCC 700698).